A 405-amino-acid polypeptide reads, in one-letter code: NAC transcription factor NAM-A1 (405 aa).

Low complexity predominate over residues 1 to 10 (MGSSDSSSGS). The interval 1–38 (MGSSDSSSGSAQKAARHQHEPPPPRQRGSAPELPPGFR) is disordered. The NAC domain occupies 33 to 204 (LPPGFRFHPT…DWVLCRIYKK (172 aa)). Residues 137-210 (LGVKKALVFY…IYKKINKAAA (74 aa)) mediate DNA binding.

As to expression, expressed in flag leaves, green spikes and peduncles.

It is found in the nucleus. Transcription factor of the NAC family associated with the grain protein content (GPC). Accelerates senescence and increases nutrient remobilization from leaves to developing grains. The tetraploid cultivated wheat (T.durum) contains one additional gene coding for a functional protein (NAM-B2) and one extra pseudogene (NAM-B1). The chain is NAC transcription factor NAM-A1 (NAM-A1) from Triticum turgidum subsp. durum (Durum wheat).